The sequence spans 122 residues: N(2)-fixation sustaining protein CowN (122 aa).

It belongs to the CowN family.

Functionally, is required to sustain N(2)-dependent growth in the presence of low levels of carbon monoxide (CO). Probably acts by protecting the N(2) fixation ability of the nitrogenase complex, which is inactivated in the presence of CO. The protein is N(2)-fixation sustaining protein CowN of Azorhizobium caulinodans (strain ATCC 43989 / DSM 5975 / JCM 20966 / LMG 6465 / NBRC 14845 / NCIMB 13405 / ORS 571).